A 182-amino-acid polypeptide reads, in one-letter code: Ribosome-recycling factor (182 aa).

The protein belongs to the RRF family.

It is found in the cytoplasm. Responsible for the release of ribosomes from messenger RNA at the termination of protein biosynthesis. May increase the efficiency of translation by recycling ribosomes from one round of translation to another. In Nostoc punctiforme (strain ATCC 29133 / PCC 73102), this protein is Ribosome-recycling factor.